The chain runs to 345 residues: S-adenosylmethionine:tRNA ribosyltransferase-isomerase (345 aa).

It belongs to the QueA family. As to quaternary structure, monomer.

The protein resides in the cytoplasm. It catalyses the reaction 7-aminomethyl-7-carbaguanosine(34) in tRNA + S-adenosyl-L-methionine = epoxyqueuosine(34) in tRNA + adenine + L-methionine + 2 H(+). Its pathway is tRNA modification; tRNA-queuosine biosynthesis. Transfers and isomerizes the ribose moiety from AdoMet to the 7-aminomethyl group of 7-deazaguanine (preQ1-tRNA) to give epoxyqueuosine (oQ-tRNA). The chain is S-adenosylmethionine:tRNA ribosyltransferase-isomerase from Rhodospirillum rubrum (strain ATCC 11170 / ATH 1.1.1 / DSM 467 / LMG 4362 / NCIMB 8255 / S1).